The sequence spans 355 residues: GTP 3',8-cyclase (355 aa).

The region spanning 16–242 (RYGRRATDMR…PDPRARDGAP (227 aa)) is the Radical SAM core domain. Residue Arg-25 coordinates GTP. Cys-32 and Cys-36 together coordinate [4Fe-4S] cluster. An S-adenosyl-L-methionine-binding site is contributed by Tyr-38. Cys-39 contributes to the [4Fe-4S] cluster binding site. Position 76 (Arg-76) interacts with GTP. Residue Gly-80 coordinates S-adenosyl-L-methionine. Position 107 (Thr-107) interacts with GTP. Position 131 (Ser-131) interacts with S-adenosyl-L-methionine. A GTP-binding site is contributed by Lys-168. Residue Met-202 participates in S-adenosyl-L-methionine binding. Residues Cys-277 and Cys-280 each contribute to the [4Fe-4S] cluster site. 282–284 (RTR) lines the GTP pocket. Residue Cys-294 participates in [4Fe-4S] cluster binding.

Belongs to the radical SAM superfamily. MoaA family. In terms of assembly, monomer. The cofactor is [4Fe-4S] cluster.

The catalysed reaction is GTP + AH2 + S-adenosyl-L-methionine = (8S)-3',8-cyclo-7,8-dihydroguanosine 5'-triphosphate + 5'-deoxyadenosine + L-methionine + A + H(+). It functions in the pathway cofactor biosynthesis; molybdopterin biosynthesis. In terms of biological role, catalyzes, together with MoaC, the conversion of 5'-GTP to cyclic pyranopterin monophosphate (cPMP or molybdopterin precursor Z). Functionally, catalyzes the cyclization of GTP to (8S)-3',8-cyclo-7,8-dihydroguanosine 5'-triphosphate. The chain is GTP 3',8-cyclase from Paenarthrobacter nicotinovorans (Arthrobacter nicotinovorans).